Reading from the N-terminus, the 299-residue chain is CCR4-NOT transcription complex subunit 9 (299 aa).

The protein belongs to the CNOT9 family. Homodimer. Component of the CCR4-NOT complex.

It localises to the nucleus. The protein localises to the cytoplasm. Its subcellular location is the P-body. Its function is as follows. Component of the CCR4-NOT complex which is one of the major cellular mRNA deadenylases and is linked to various cellular processes including bulk mRNA degradation, miRNA-mediated repression, translational repression during translational initiation and general transcription regulation. Additional complex functions may be a consequence of its influence on mRNA expression. Involved in down-regulation of MYB- and JUN-dependent transcription. Enhances ligand-dependent transcriptional activity of nuclear hormone receptors. May play a role in cell differentiation. In Xenopus tropicalis (Western clawed frog), this protein is CCR4-NOT transcription complex subunit 9.